The chain runs to 381 residues: L-lactate dehydrogenase A-like 6B (381 aa).

NAD(+)-binding positions include 101 to 106 (DLDEDK) and Arg-148. 3 residues coordinate substrate: Arg-155, Asn-187, and Arg-218. Residue Asn-187 coordinates NAD(+). His-242 serves as the catalytic Proton acceptor. Residue Thr-297 coordinates substrate.

It belongs to the LDH/MDH superfamily. LDH family. As to expression, testis specific.

The enzyme catalyses (S)-lactate + NAD(+) = pyruvate + NADH + H(+). The protein operates within fermentation; pyruvate fermentation to lactate; (S)-lactate from pyruvate: step 1/1. This chain is L-lactate dehydrogenase A-like 6B (LDHAL6B), found in Homo sapiens (Human).